The chain runs to 286 residues: Deleted in azoospermia-like-B (286 aa).

The RRM domain occupies 33–114; the sequence is NTVFVGGIDI…PAIRKICTYV (82 aa). Residues 155 to 180 enclose the DAZ domain; it reads ACPYPSSPPMAIQQIPVGCQQPGYFQ.

Belongs to the RRM DAZ family. In terms of assembly, interacts with the C-terminus of pabp1 and with epabp. Prior to oocyte maturation, found in a complex with epabp and pum2 proteins and spdy1 mRNA; pum2 dissociates from the complex during maturation.

Its subcellular location is the cytoplasm. Functionally, RNA-binding protein that is required for primordial germ cell (PGC) differentiation and indirectly necessary for the migration of PGCs through the endoderm. May promote meiotic cell division during spermatogenesis. Shows a preference for G- and U-rich RNAs and probably binds the 3'-UTR of target mRNAs. Stimulates the initiation of translation of mRNAs through the recruitment of poly(A)-binding proteins (PABPs). The sequence is that of Deleted in azoospermia-like-B (dazl-b) from Xenopus laevis (African clawed frog).